The following is a 210-amino-acid chain: Large ribosomal subunit protein uL3 (210 aa).

The segment covering 132–144 (GPMKHGSKYHRRP) has biased composition (basic residues). The disordered stretch occupies residues 132–152 (GPMKHGSKYHRRPGSAGAKGP).

It belongs to the universal ribosomal protein uL3 family. In terms of assembly, part of the 50S ribosomal subunit. Forms a cluster with proteins L14 and L19.

Its function is as follows. One of the primary rRNA binding proteins, it binds directly near the 3'-end of the 23S rRNA, where it nucleates assembly of the 50S subunit. The protein is Large ribosomal subunit protein uL3 of Heliobacterium modesticaldum (strain ATCC 51547 / Ice1).